Consider the following 392-residue polypeptide: Enoyl-[acyl-carrier-protein] reductase [NADH] (392 aa).

NAD(+)-binding positions include 46–51, 72–73, 108–109, and 136–137; these read GSSSGY, LE, DA, and VA. Y225 is a substrate binding site. Y235 (proton donor) is an active-site residue. NAD(+) is bound by residues K244 and 273 to 275; that span reads LVT.

This sequence belongs to the TER reductase family. In terms of assembly, monomer.

It catalyses the reaction a 2,3-saturated acyl-[ACP] + NAD(+) = a (2E)-enoyl-[ACP] + NADH + H(+). It functions in the pathway lipid metabolism; fatty acid biosynthesis. Functionally, involved in the final reduction of the elongation cycle of fatty acid synthesis (FAS II). Catalyzes the reduction of a carbon-carbon double bond in an enoyl moiety that is covalently linked to an acyl carrier protein (ACP). This chain is Enoyl-[acyl-carrier-protein] reductase [NADH], found in Streptomyces avermitilis (strain ATCC 31267 / DSM 46492 / JCM 5070 / NBRC 14893 / NCIMB 12804 / NRRL 8165 / MA-4680).